The following is a 298-amino-acid chain: Glutamyl-Q tRNA(Asp) synthetase (298 aa).

L-glutamate contacts are provided by residues 9 to 13 (RFAPS) and Glu45. The 'HIGH' region signature appears at 12–22 (PSPSGELHFGS). Cys101, Cys103, Tyr115, and Cys119 together coordinate Zn(2+). The L-glutamate site is built by Tyr172 and Arg190. A 'KMSKS' region motif is present at residues 228 to 232 (KLSKQ). Lys231 contributes to the ATP binding site.

It belongs to the class-I aminoacyl-tRNA synthetase family. GluQ subfamily. It depends on Zn(2+) as a cofactor.

Catalyzes the tRNA-independent activation of glutamate in presence of ATP and the subsequent transfer of glutamate onto a tRNA(Asp). Glutamate is transferred on the 2-amino-5-(4,5-dihydroxy-2-cyclopenten-1-yl) moiety of the queuosine in the wobble position of the QUC anticodon. This chain is Glutamyl-Q tRNA(Asp) synthetase, found in Salmonella typhimurium (strain LT2 / SGSC1412 / ATCC 700720).